The sequence spans 86 residues: Small ribosomal subunit protein bS20 (86 aa).

The protein belongs to the bacterial ribosomal protein bS20 family.

In terms of biological role, binds directly to 16S ribosomal RNA. The polypeptide is Small ribosomal subunit protein bS20 (Novosphingobium aromaticivorans (strain ATCC 700278 / DSM 12444 / CCUG 56034 / CIP 105152 / NBRC 16084 / F199)).